The primary structure comprises 354 residues: Uroporphyrinogen decarboxylase (354 aa).

Substrate-binding positions include 25–29 (RQAGR), Asp-75, Tyr-152, Thr-207, and His-330.

Belongs to the uroporphyrinogen decarboxylase family. Homodimer.

It localises to the cytoplasm. It catalyses the reaction uroporphyrinogen III + 4 H(+) = coproporphyrinogen III + 4 CO2. Its pathway is porphyrin-containing compound metabolism; protoporphyrin-IX biosynthesis; coproporphyrinogen-III from 5-aminolevulinate: step 4/4. Catalyzes the decarboxylation of four acetate groups of uroporphyrinogen-III to yield coproporphyrinogen-III. The polypeptide is Uroporphyrinogen decarboxylase (Xanthomonas oryzae pv. oryzae (strain MAFF 311018)).